The primary structure comprises 314 residues: Pantothenate synthetase (314 aa).

M43 to H50 is a binding site for ATP. The Proton donor role is filled by H50. Q75 serves as a coordination point for (R)-pantoate. Q75 contacts beta-alanine. Residues M112–E131 form a disordered region. G161 to D164 provides a ligand contact to ATP. Q167 is a binding site for (R)-pantoate. Residues V190 and L198 to R201 contribute to the ATP site.

Belongs to the pantothenate synthetase family. As to quaternary structure, homodimer.

The protein resides in the cytoplasm. It carries out the reaction (R)-pantoate + beta-alanine + ATP = (R)-pantothenate + AMP + diphosphate + H(+). It participates in cofactor biosynthesis; (R)-pantothenate biosynthesis; (R)-pantothenate from (R)-pantoate and beta-alanine: step 1/1. Its function is as follows. Catalyzes the condensation of pantoate with beta-alanine in an ATP-dependent reaction via a pantoyl-adenylate intermediate. The sequence is that of Pantothenate synthetase from Mycolicibacterium smegmatis (strain ATCC 700084 / mc(2)155) (Mycobacterium smegmatis).